We begin with the raw amino-acid sequence, 52 residues long: Large ribosomal subunit protein bL32c (52 aa).

This sequence belongs to the bacterial ribosomal protein bL32 family.

Its subcellular location is the plastid. It localises to the chloroplast. The chain is Large ribosomal subunit protein bL32c from Lobularia maritima (Sweet alyssum).